Consider the following 636-residue polypeptide: 1-deoxy-D-xylulose-5-phosphate synthase (636 aa).

Thiamine diphosphate contacts are provided by residues His74 and 115-117 (GHA). Asp146 serves as a coordination point for Mg(2+). Thiamine diphosphate contacts are provided by residues 147-148 (GA), Asn175, Tyr285, and Glu368. Mg(2+) is bound at residue Asn175.

It belongs to the transketolase family. DXPS subfamily. As to quaternary structure, homodimer. It depends on Mg(2+) as a cofactor. Thiamine diphosphate is required as a cofactor.

It carries out the reaction D-glyceraldehyde 3-phosphate + pyruvate + H(+) = 1-deoxy-D-xylulose 5-phosphate + CO2. It participates in metabolic intermediate biosynthesis; 1-deoxy-D-xylulose 5-phosphate biosynthesis; 1-deoxy-D-xylulose 5-phosphate from D-glyceraldehyde 3-phosphate and pyruvate: step 1/1. Functionally, catalyzes the acyloin condensation reaction between C atoms 2 and 3 of pyruvate and glyceraldehyde 3-phosphate to yield 1-deoxy-D-xylulose-5-phosphate (DXP). The chain is 1-deoxy-D-xylulose-5-phosphate synthase from Anaeromyxobacter dehalogenans (strain 2CP-C).